Here is a 30-residue protein sequence, read N- to C-terminus: Cyclotide mden-I (30 aa).

The cyclopeptide (Gly-Asn) cross-link spans G1–N30. 3 disulfide bridges follow: C4-C20, C8-C22, and C13-C27.

It belongs to the cyclotide family. Bracelet subfamily. Post-translationally, this is a cyclic peptide.

Its function is as follows. Probably participates in a plant defense mechanism. In Melicytus dentatus (Tree violet), this protein is Cyclotide mden-I.